Reading from the N-terminus, the 125-residue chain is Probable prefoldin subunit 6 (125 aa).

The protein belongs to the prefoldin subunit beta family. As to quaternary structure, heterohexamer of two PFD-alpha type and four PFD-beta type subunits.

Binds specifically to cytosolic chaperonin (c-CPN) and transfers target proteins to it. Binds to nascent polypeptide chain and promotes folding in an environment in which there are many competing pathways for nonnative proteins. This is Probable prefoldin subunit 6 from Drosophila melanogaster (Fruit fly).